The sequence spans 85 residues: U4-theraphotoxin-Hhn1s (85 aa).

A signal peptide spans 1–22 (MKVTLIAILTCAAVLVLHTTAA). A propeptide spanning residues 23-48 (EELEAESQLMEVGMPDTELAAVDEER) is cleaved from the precursor. Cystine bridges form between C52–C66, C56–C77, and C71–C82.

This sequence belongs to the neurotoxin 12 (Hwtx-2) family. 02 (Hwtx-2) subfamily. As to expression, expressed by the venom gland.

The protein localises to the secreted. Its function is as follows. Postsynaptic neurotoxin. The chain is U4-theraphotoxin-Hhn1s from Cyriopagopus hainanus (Chinese bird spider).